A 337-amino-acid polypeptide reads, in one-letter code: 2-oxoglutarate-dependent ethylene/succinate-forming enzyme (337 aa).

In terms of domain architecture, Fe2OG dioxygenase spans 166-286; sequence GWHHMRVLRF…RFACAYFHEP (121 aa). Positions 189 and 268 each coordinate Fe cation.

This sequence belongs to the iron/ascorbate-dependent oxidoreductase family. As to quaternary structure, monomer. Fe(2+) serves as cofactor.

The enzyme catalyses 2-oxoglutarate + O2 + 2 H(+) = ethene + 3 CO2 + H2O. It catalyses the reaction L-arginine + 2-oxoglutarate + O2 = guanidine + L-glutamate 5-semialdehyde + succinate + CO2. It functions in the pathway alkene biosynthesis; ethylene biosynthesis via 2-oxoglutarate. Its function is as follows. Simultaneously catalyzes two reactions, namely formation of ethylene and of succinate from 2-oxoglutarate. The polypeptide is 2-oxoglutarate-dependent ethylene/succinate-forming enzyme (efe) (Pseudomonas syringae pv. pisi).